The following is a 2200-amino-acid chain: Tyrosine-protein phosphatase Lar-like (2200 aa).

An N-terminal signal peptide occupies residues 1 to 42 (MIQFRNKNNSMNRIARHLRNVARRKGSSLLLFLMLSTVLVAA). N-linked (GlcNAc...) asparagine glycans are attached at residues Asn8 and Asn116. Topologically, residues 43-1497 (KEDDPARLVV…LRGASQKSSP (1455 aa)) are extracellular. Ig-like C2-type domains lie at 47 to 139 (PARL…ASLT), 151 to 240 (PQIE…KAAN), and 250 to 334 (PYFS…TTVI). Intrachain disulfides connect Cys69/Cys122 and Cys172/Cys225. Asn269 and Asn315 each carry an N-linked (GlcNAc...) asparagine glycan. A disulfide bridge connects residues Cys272 and Cys318. 9 Fibronectin type-III domains span residues 341 to 434 (PPVN…TKPS), 439 to 535 (APVS…TRQG), 539 to 628 (QPPM…TIAS), 633 to 748 (SPTI…TLED), 752 to 856 (APRN…IPPE), 857 to 956 (APEI…PVGS), 957 to 1053 (PDGE…PDPA), 1058 to 1158 (PPTN…NYMT), and 1181 to 1287 (MVQN…TGPP). Asn574 carries N-linked (GlcNAc...) asparagine glycosylation. N-linked (GlcNAc...) asparagine glycosylation is found at Asn945, Asn988, Asn1069, Asn1141, Asn1212, and Asn1330. The interval 1355–1392 (LARSLSVSPSKKLKRKASEVGDDSQSASYHPKEKRARR) is disordered. Residues 1498–1518 (WVGACIAFLVLFSIVGMLICW) form a helical membrane-spanning segment. At 1519-2200 (WLRCNKKSAG…EYLAAYDNFS (682 aa)) the chain is on the cytoplasmic side. Tyrosine-protein phosphatase domains are found at residues 1647 to 1902 (FQSE…VLDA) and 1933 to 2192 (IDME…AYEY). Substrate is bound by residues Asp1811, 1843–1849 (CSAGIGR), and Gln1887. The Phosphocysteine intermediate role is filled by Cys1843. The active-site Phosphocysteine intermediate is the Cys2133.

It belongs to the protein-tyrosine phosphatase family. Receptor class 2A subfamily. Both isoforms are ubiquitously expressed in early embryos. In later embryos, larvae and adults expression is highest in the nerve ring, dorsal cord, ventral cord and epithelial tissues.

It localises to the cell junction. The protein localises to the adherens junction. The protein resides in the cell membrane. The enzyme catalyses O-phospho-L-tyrosyl-[protein] + H2O = L-tyrosyl-[protein] + phosphate. Has a role in early neural and epidermal development; neuroblast movements during closure of the gastrulation cleft and epidermal morphogenesis. Vab-1 and ptp-3 may function redundantly within the same sets of neuronal precursors. This Caenorhabditis elegans protein is Tyrosine-protein phosphatase Lar-like (ptp-3).